The sequence spans 357 residues: Dehydrogenase FUB6 (357 aa).

Positions 1–17 (MGGEVSNKTWVFKQSPS) are enriched in polar residues. A disordered region spans residues 1 to 22 (MGGEVSNKTWVFKQSPSGLPEP).

Belongs to the zinc-containing alcohol dehydrogenase family. Quinone oxidoreductase subfamily.

It functions in the pathway mycotoxin biosynthesis. Its function is as follows. Dehydrogenase; part of the gene cluster that mediates the biosynthesis of fusaric acid, a mycotoxin with low to moderate toxicity to animals and humans, but with high phytotoxic properties. L-aspartate is suggested as fusaric acid amino acid precursor that is activated and further processed to O-acetyl-L-homoserine by cluster enzymes aspartate kinase FUB3 and homoserine O-acetyltransferase FUB5, as well as enzymes of the primary metabolism. The polyketide synthase (PKS) FUB1 generates the triketide trans-2-hexenal which is presumptively released by the hydrolase FUB4 and linked to the NRPS-bound amino acid precursor by NAD(P)-dependent dehydrogenase FUB6. FUB1, FUB4, and the non-canonical NRPS Fub8 may form an enzyme complex. Further processing of the NRPS-bound intermediate might be carried out by FUB6 and the O-acetylhomoserine FUB7, enabling a spontaneous electrocyclization to close the carbon backbone of fusaric acid. Dihydrofusaric acid is likely to be released via reduction by the thioester reductase (TR) domain of FUB8 whereupon the final oxidation to fusaric acid may (also) be performed by the FMN-dependent dehydrogenase FUB9. The chain is Dehydrogenase FUB6 from Fusarium oxysporum f. sp. lycopersici (strain 4287 / CBS 123668 / FGSC 9935 / NRRL 34936) (Fusarium vascular wilt of tomato).